The primary structure comprises 222 residues: Coiled-coil domain-containing protein 43 (222 aa).

Residue lysine 93 forms a Glycyl lysine isopeptide (Lys-Gly) (interchain with G-Cter in SUMO1) linkage. A coiled-coil region spans residues 119 to 143 (SEEEKQRKAALLAQYADVTDEEDEA). The segment at 136 to 222 (VTDEEDEADK…KRTQKGERKR (87 aa)) is disordered. The residue at position 137 (threonine 137) is a Phosphothreonine. Positions 152-168 (STANVSSDRTLFRNTNV) are enriched in polar residues. The span at 172–209 (LNARKLERDSLRDESQRKKEQDKLQREKDKLAKQERKE) shows a compositional bias: basic and acidic residues. Residues 175-217 (RKLERDSLRDESQRKKEQDKLQREKDKLAKQERKEKEKKRTQK) are a coiled coil. Residues 210–222 (KEKKRTQKGERKR) show a composition bias toward basic residues.

Belongs to the CCDC43 family.

In Mus musculus (Mouse), this protein is Coiled-coil domain-containing protein 43 (Ccdc43).